The following is a 140-amino-acid chain: Nucleoside diphosphate kinase (140 aa).

Positions 11, 59, 87, 93, 104, and 114 each coordinate ATP. His117 acts as the Pros-phosphohistidine intermediate in catalysis.

It belongs to the NDK family. As to quaternary structure, homotetramer. Mg(2+) serves as cofactor.

It localises to the cytoplasm. The enzyme catalyses a 2'-deoxyribonucleoside 5'-diphosphate + ATP = a 2'-deoxyribonucleoside 5'-triphosphate + ADP. It carries out the reaction a ribonucleoside 5'-diphosphate + ATP = a ribonucleoside 5'-triphosphate + ADP. Functionally, major role in the synthesis of nucleoside triphosphates other than ATP. The ATP gamma phosphate is transferred to the NDP beta phosphate via a ping-pong mechanism, using a phosphorylated active-site intermediate. In Novosphingobium aromaticivorans (strain ATCC 700278 / DSM 12444 / CCUG 56034 / CIP 105152 / NBRC 16084 / F199), this protein is Nucleoside diphosphate kinase.